Reading from the N-terminus, the 424-residue chain is Probable ribonuclease FAU-1 (424 aa).

The protein belongs to the FAU-1 family.

In terms of biological role, probable RNase involved in rRNA stability through maturation and/or degradation of precursor rRNAs. Binds to RNA in loop regions with AU-rich sequences. This is Probable ribonuclease FAU-1 from Saccharolobus islandicus (strain L.S.2.15 / Lassen #1) (Sulfolobus islandicus).